Reading from the N-terminus, the 344-residue chain is tRNA N6-adenosine threonylcarbamoyltransferase (344 aa).

The Fe cation site is built by H113 and H117. Substrate-binding positions include 135-139 (LVSGG), D169, G182, D186, and N278. Residue D306 participates in Fe cation binding. Positions 325–344 (ESPISVGTDPSLSVETPQVF) are disordered. Positions 326 to 344 (SPISVGTDPSLSVETPQVF) are enriched in polar residues.

This sequence belongs to the KAE1 / TsaD family. It depends on Fe(2+) as a cofactor.

It is found in the cytoplasm. It carries out the reaction L-threonylcarbamoyladenylate + adenosine(37) in tRNA = N(6)-L-threonylcarbamoyladenosine(37) in tRNA + AMP + H(+). Its function is as follows. Required for the formation of a threonylcarbamoyl group on adenosine at position 37 (t(6)A37) in tRNAs that read codons beginning with adenine. Is involved in the transfer of the threonylcarbamoyl moiety of threonylcarbamoyl-AMP (TC-AMP) to the N6 group of A37, together with TsaE and TsaB. TsaD likely plays a direct catalytic role in this reaction. This chain is tRNA N6-adenosine threonylcarbamoyltransferase, found in Corynebacterium glutamicum (strain ATCC 13032 / DSM 20300 / JCM 1318 / BCRC 11384 / CCUG 27702 / LMG 3730 / NBRC 12168 / NCIMB 10025 / NRRL B-2784 / 534).